The sequence spans 90 residues: Probable oxaloacetate decarboxylase gamma chain 2 (90 aa).

A helical membrane pass occupies residues 10–32 (GINLLTLGMGFVFIFLIFLVYAT).

This sequence belongs to the OadG family. In terms of assembly, heterotrimer of an alpha, a beta and a gamma subunit. The cofactor is Na(+).

It is found in the cell membrane. The catalysed reaction is oxaloacetate + 2 Na(+)(in) + H(+) = pyruvate + 2 Na(+)(out) + CO2. Its function is as follows. Catalyzes the decarboxylation of oxaloacetate coupled to Na(+) translocation. The polypeptide is Probable oxaloacetate decarboxylase gamma chain 2 (oadG2) (Vibrio cholerae serotype O1 (strain ATCC 39315 / El Tor Inaba N16961)).